Here is a 652-residue protein sequence, read N- to C-terminus: Phosphomethylpyrimidine synthase (652 aa).

2 disordered regions span residues 1–45 (MVSR…SVSA) and 118–166 (QRGD…LDGR). The span at 8–45 (SSSSTSKAVTSSPSTSSLSSAASSPSVSSSSSSSSVSA) shows a compositional bias: low complexity. The span at 134 to 162 (GASGPGTLGSGTPGSGTPGSGPLGLGGTD) shows a compositional bias: gly residues. Substrate is bound by residues Asn245, Met274, Tyr303, His339, 359–361 (SRG), 400–403 (DGLR), and Glu439. Residue His443 coordinates Zn(2+). Tyr466 is a substrate binding site. His507 is a Zn(2+) binding site. [4Fe-4S] cluster is bound by residues Cys587, Cys590, and Cys595.

The protein belongs to the ThiC family. [4Fe-4S] cluster is required as a cofactor.

It carries out the reaction 5-amino-1-(5-phospho-beta-D-ribosyl)imidazole + S-adenosyl-L-methionine = 4-amino-2-methyl-5-(phosphooxymethyl)pyrimidine + CO + 5'-deoxyadenosine + formate + L-methionine + 3 H(+). It participates in cofactor biosynthesis; thiamine diphosphate biosynthesis. Catalyzes the synthesis of the hydroxymethylpyrimidine phosphate (HMP-P) moiety of thiamine from aminoimidazole ribotide (AIR) in a radical S-adenosyl-L-methionine (SAM)-dependent reaction. This chain is Phosphomethylpyrimidine synthase, found in Frankia casuarinae (strain DSM 45818 / CECT 9043 / HFP020203 / CcI3).